A 354-amino-acid chain; its full sequence is Alanine racemase (354 aa).

The Proton acceptor; specific for D-alanine role is filled by Lys-33. Position 33 is an N6-(pyridoxal phosphate)lysine (Lys-33). A substrate-binding site is contributed by Arg-127. Tyr-251 (proton acceptor; specific for L-alanine) is an active-site residue. Met-299 lines the substrate pocket.

It belongs to the alanine racemase family. Pyridoxal 5'-phosphate serves as cofactor.

The catalysed reaction is L-alanine = D-alanine. It functions in the pathway amino-acid biosynthesis; D-alanine biosynthesis; D-alanine from L-alanine: step 1/1. Catalyzes the interconversion of L-alanine and D-alanine. May also act on other amino acids. This Fusobacterium nucleatum subsp. nucleatum (strain ATCC 25586 / DSM 15643 / BCRC 10681 / CIP 101130 / JCM 8532 / KCTC 2640 / LMG 13131 / VPI 4355) protein is Alanine racemase (alr).